The primary structure comprises 246 residues: 2,3-bisphosphoglycerate-dependent phosphoglycerate mutase (246 aa).

Residues 8–15 (RHGQSQWN), 21–22 (TG), arginine 60, 87–90 (EKHY), lysine 98, 114–115 (RR), and 183–184 (GN) contribute to the substrate site. Histidine 9 functions as the Tele-phosphohistidine intermediate in the catalytic mechanism. Residue glutamate 87 is the Proton donor/acceptor of the active site.

Belongs to the phosphoglycerate mutase family. BPG-dependent PGAM subfamily. As to quaternary structure, homodimer.

The catalysed reaction is (2R)-2-phosphoglycerate = (2R)-3-phosphoglycerate. It functions in the pathway carbohydrate degradation; glycolysis; pyruvate from D-glyceraldehyde 3-phosphate: step 3/5. Catalyzes the interconversion of 2-phosphoglycerate and 3-phosphoglycerate. This Dichelobacter nodosus (strain VCS1703A) protein is 2,3-bisphosphoglycerate-dependent phosphoglycerate mutase.